A 213-amino-acid polypeptide reads, in one-letter code: Motile sperm domain-containing protein 1 (213 aa).

The 128-residue stretch at 16 to 143 (PVFVFPTELI…KEHLTESVFF (128 aa)) folds into the MSP domain. The next 2 membrane-spanning stretches (helical) occupy residues 159 to 179 (SLLTVFLGVVCIAALMLPTLG) and 191 to 211 (LSVNQKLVAAYILGLITMAIL). The Nuclear export signal signature appears at 205 to 208 (LITM).

It localises to the endoplasmic reticulum membrane. Its subcellular location is the golgi apparatus membrane. Functionally, plays a role in differentiation and/or proliferation of mesenchymal stem cells. Proposed to be involved in epithelial-to-mesenchymal transition (EMT). However, another study suggests that it is not required for EMT or stem cell self-renewal and acts during later stages of differentiation. This Rattus norvegicus (Rat) protein is Motile sperm domain-containing protein 1 (Mospd1).